The sequence spans 493 residues: 11S globulin seed storage protein G3 (493 aa).

Positions 1-20 (MASKATLLLAFTLLFATCIA) are cleaved as a signal peptide. 2 disulfide bridges follow: Cys-32–Cys-65 and Cys-103–Cys-312. In terms of domain architecture, Cupin type-1 1 spans 37–248 (IEALEPIEVI…SFNVDQETAQ (212 aa)). Disordered stretches follow at residues 190-229 (PQAQ…NIFN) and 269-305 (IVRP…GWSN). 2 stretches are compositionally biased toward low complexity: residues 191–221 (QAQA…QGQG) and 280–298 (RQQQ…QQQG). In terms of domain architecture, Cupin type-1 2 spans 318 to 467 (VNIDNPSQAD…RYQLSREEAQ (150 aa)).

This sequence belongs to the 11S seed storage protein (globulins) family. As to quaternary structure, hexamer; each subunit is composed of an acidic and a basic chain derived from a single precursor and linked by a disulfide bond.

Its function is as follows. This is a seed storage protein. In Helianthus annuus (Common sunflower), this protein is 11S globulin seed storage protein G3 (HAG3).